The following is a 368-amino-acid chain: Methionine import ATP-binding protein MetN (368 aa).

Residues 1–14 (MASDAQPSVDQPSA) are compositionally biased toward polar residues. The interval 1–27 (MASDAQPSVDQPSAGTPGATGNSTGTT) is disordered. Low complexity predominate over residues 15–27 (GTPGATGNSTGTT). The 240-residue stretch at 31–270 (IVFRDVTKIF…PQTKTAANFV (240 aa)) folds into the ABC transporter domain. Position 67-74 (67-74 (GYSGAGKS)) interacts with ATP.

The protein belongs to the ABC transporter superfamily. Methionine importer (TC 3.A.1.24) family. The complex is composed of two ATP-binding proteins (MetN), two transmembrane proteins (MetI) and a solute-binding protein (MetQ).

It is found in the cell membrane. The enzyme catalyses L-methionine(out) + ATP + H2O = L-methionine(in) + ADP + phosphate + H(+). It catalyses the reaction D-methionine(out) + ATP + H2O = D-methionine(in) + ADP + phosphate + H(+). Part of the ABC transporter complex MetNIQ involved in methionine import. Responsible for energy coupling to the transport system. This chain is Methionine import ATP-binding protein MetN, found in Corynebacterium jeikeium (strain K411).